Consider the following 244-residue polypeptide: Ribosomal RNA small subunit methyltransferase G (244 aa).

Residues glycine 79, phenylalanine 84, 130-131 (AE), and arginine 150 each bind S-adenosyl-L-methionine. The disordered stretch occupies residues 221–244 (KKPSPKRYPRKPGTPAKQPLTAPM).

This sequence belongs to the methyltransferase superfamily. RNA methyltransferase RsmG family.

It is found in the cytoplasm. Functionally, specifically methylates the N7 position of a guanine in 16S rRNA. The chain is Ribosomal RNA small subunit methyltransferase G from Lactiplantibacillus plantarum (strain ATCC BAA-793 / NCIMB 8826 / WCFS1) (Lactobacillus plantarum).